We begin with the raw amino-acid sequence, 79 residues long: Cytochrome c oxidase assembly factor 6 homolog (79 aa).

The CHCH domain occupies 9–52; sequence RQACWGARDLYWRCLDDNAEDAARCQKLRSSFEASCPQQWIKYF. The short motif at 12 to 22 is the Cx9C motif element; it reads CWGARDLYWRC. 2 disulfides stabilise this stretch: Cys-12–Cys-44 and Cys-22–Cys-33. Positions 33–44 match the Cx10C motif motif; sequence CQKLRSSFEASC.

Belongs to the cytochrome c oxidase subunit 6B family. In terms of assembly, found in a complex with TMEM177, COX20, MT-CO2/COX2, COX18, SCO1 and SCO2. Interacts with COA1, MT-CO2/COX2, SCO1, SCO2 and COX20. Interacts with COX20 in a MT-CO2/COX2- and COX18-dependent manner. Interacts with COX16.

The protein localises to the mitochondrion. It is found in the mitochondrion intermembrane space. Its function is as follows. Involved in the maturation of the mitochondrial respiratory chain complex IV subunit MT-CO2/COX2. Thereby, may regulate early steps of complex IV assembly. Mitochondrial respiratory chain complex IV or cytochrome c oxidase is the component of the respiratory chain that catalyzes the transfer of electrons from intermembrane space cytochrome c to molecular oxygen in the matrix and as a consequence contributes to the proton gradient involved in mitochondrial ATP synthesis. May also be required for efficient formation of respiratory supercomplexes comprised of complexes III and IV. The sequence is that of Cytochrome c oxidase assembly factor 6 homolog (Coa6) from Mus musculus (Mouse).